Reading from the N-terminus, the 394-residue chain is Chaperone protein DnaJ (394 aa).

Residues 4–68 (DYYEILGVSR…ELKARYDRFG (65 aa)) enclose the J domain. The CR-type zinc finger occupies 136–218 (GGEKQIRISH…CNGEGLAQTT (83 aa)). Residues Cys-149, Cys-152, Cys-166, Cys-169, Cys-192, Cys-195, Cys-206, and Cys-209 each contribute to the Zn(2+) site. CXXCXGXG motif repeat units follow at residues 149-156 (CNVCGGSG), 166-173 (CPTCGGSG), 192-199 (CPTCGGSG), and 206-213 (CYNCNGEG).

Belongs to the DnaJ family. In terms of assembly, homodimer. The cofactor is Zn(2+).

It is found in the cytoplasm. Functionally, participates actively in the response to hyperosmotic and heat shock by preventing the aggregation of stress-denatured proteins and by disaggregating proteins, also in an autonomous, DnaK-independent fashion. Unfolded proteins bind initially to DnaJ; upon interaction with the DnaJ-bound protein, DnaK hydrolyzes its bound ATP, resulting in the formation of a stable complex. GrpE releases ADP from DnaK; ATP binding to DnaK triggers the release of the substrate protein, thus completing the reaction cycle. Several rounds of ATP-dependent interactions between DnaJ, DnaK and GrpE are required for fully efficient folding. Also involved, together with DnaK and GrpE, in the DNA replication of plasmids through activation of initiation proteins. The sequence is that of Chaperone protein DnaJ from Synechococcus sp. (strain JA-2-3B'a(2-13)) (Cyanobacteria bacterium Yellowstone B-Prime).